Consider the following 295-residue polypeptide: UDP-N-acetylenolpyruvoylglucosamine reductase (295 aa).

In terms of domain architecture, FAD-binding PCMH-type spans 25-189 (RVGGPADLFA…LEALFRLDQR (165 aa)). R169 is an active-site residue. Residue S218 is the Proton donor of the active site. E288 is an active-site residue.

The protein belongs to the MurB family. FAD is required as a cofactor.

It is found in the cytoplasm. It catalyses the reaction UDP-N-acetyl-alpha-D-muramate + NADP(+) = UDP-N-acetyl-3-O-(1-carboxyvinyl)-alpha-D-glucosamine + NADPH + H(+). It participates in cell wall biogenesis; peptidoglycan biosynthesis. In terms of biological role, cell wall formation. The sequence is that of UDP-N-acetylenolpyruvoylglucosamine reductase from Pelobacter propionicus (strain DSM 2379 / NBRC 103807 / OttBd1).